Here is a 376-residue protein sequence, read N- to C-terminus: Deoxyuridine 5'-triphosphate nucleotidohydrolase (376 aa).

This sequence belongs to the dUTPase family. Mg(2+) is required as a cofactor.

It carries out the reaction dUTP + H2O = dUMP + diphosphate + H(+). In terms of biological role, involved in nucleotide metabolism: produces dUMP, the immediate precursor of thymidine nucleotides and decreases the intracellular concentration of dUTP to avoid uracil incorporation into viral DNA. The sequence is that of Deoxyuridine 5'-triphosphate nucleotidohydrolase from Human herpesvirus 6B (strain Z29) (HHV-6 variant B).